The chain runs to 332 residues: Ribosomal RNA small subunit methyltransferase H (332 aa).

S-adenosyl-L-methionine-binding positions include 36–38 (GGY), Asp54, Phe81, Asp102, and Gln109. Positions 295–322 (PRARSAKLRGAERTESPAHAAGDLPGWP) are disordered.

The protein belongs to the methyltransferase superfamily. RsmH family.

The protein localises to the cytoplasm. It carries out the reaction cytidine(1402) in 16S rRNA + S-adenosyl-L-methionine = N(4)-methylcytidine(1402) in 16S rRNA + S-adenosyl-L-homocysteine + H(+). In terms of biological role, specifically methylates the N4 position of cytidine in position 1402 (C1402) of 16S rRNA. The polypeptide is Ribosomal RNA small subunit methyltransferase H (Rhodopseudomonas palustris (strain ATCC BAA-98 / CGA009)).